The sequence spans 544 residues: Cytochrome P450 monooxygenase tenB (544 aa).

Residues 13 to 33 (LGYYEKVTGILGVVSIILLFW) traverse the membrane as a helical segment. Over residues 438-448 (FDPFRFSRASK) the composition is skewed to basic and acidic residues. The segment at 438-467 (FDPFRFSRASKDDDDDDDDDGRSTSSHTKD) is disordered. Cys486 serves as a coordination point for heme.

This sequence belongs to the cytochrome P450 family. The cofactor is heme.

It is found in the membrane. It functions in the pathway secondary metabolite biosynthesis. In terms of biological role, cytochrome P450 monooxygenase; part of the gene cluster that mediates the biosynthesis of tenellin-type 2-pyridones, iron-chelating compounds involved in iron stress tolerance, competition with the natural competitor fungus Metarhizium robertsii and insect hosts infection. TenB catalyzes the selective N-hydroxylation of the 2-pyridone nitrogen of yield tellinin and 15-hydroxytellenin (15-HT), respectively. The pathway begins with the assembly of the polyketide-amino acid backbone by the hybrid PKS-NRPS tenS with the help of the enoyl reductase tenC. These enzymes catalyze the synthesis of the pyrrolidine-2-dione intermediates pretellinin A, 11-hydropretellenin A, 12-hydropretellenin A, 13-hydropretellenin A, 14-hydropretellenin A, 12-oxopretellenin A and prototellinin D. The cytochrome P450 monooxygenase tenA then catalyzes an oxidative ring expansion of pretenellin A and 14-hydropretellenin A to form the 2-pyridone core, leading to pretenellin B and pyridovericin, respectively. The cytochrome P450 monooxygenase tenB is then required for the selective N-hydroxylation of the 2-pyridone nitrogen of yield tellinin and 15-hydroxytellenin (15-HT), respectively. The UDP-glucosyltransferase GT1 and the methyltransferase MT1, located outside the tenS gene cluster, contribute to the stepwise glycosylation and methylation of 15-HT to obtain the glycoside pyridovericin-N-O-(4-O-methyl-beta-D-glucopyranoside) (PMGP). Additional related compounds such as 1-O-methyl-15-HT, (8Z)-1-O-methyl-15-HT, and O-methyltenellin A are also produced but the enzymes involved in their biosynthesis have still to be determined. The polypeptide is Cytochrome P450 monooxygenase tenB (Beauveria bassiana (strain ARSEF 2860) (White muscardine disease fungus)).